A 442-amino-acid polypeptide reads, in one-letter code: Probable alpha-galactosidase B (442 aa).

A signal peptide spans 1 to 19; that stretch reads MQRYISLSVSLSLLSGANA. 2 disulfides stabilise this stretch: C42/C74 and C124/C154. Catalysis depends on D152, which acts as the Nucleophile. N-linked (GlcNAc...) asparagine glycosylation is found at N159, N173, N179, and N215. A substrate-binding site is contributed by 224–228; it reads EWGQA. N-linked (GlcNAc...) asparagine glycosylation is present at N235. D246 functions as the Proton donor in the catalytic mechanism. N-linked (GlcNAc...) asparagine glycosylation is present at N285.

It belongs to the glycosyl hydrolase 27 family.

It is found in the secreted. It catalyses the reaction Hydrolysis of terminal, non-reducing alpha-D-galactose residues in alpha-D-galactosides, including galactose oligosaccharides, galactomannans and galactolipids.. Hydrolyzes a variety of simple alpha-D-galactoside as well as more complex molecules such as oligosaccharides and polysaccharides. The chain is Probable alpha-galactosidase B (aglB) from Aspergillus oryzae (strain ATCC 42149 / RIB 40) (Yellow koji mold).